The chain runs to 393 residues: Dual specificity mitogen-activated protein kinase kinase 1 (393 aa).

The segment at 1–27 is disordered; that stretch reads MPKKKPTPIQLNPAPDGSAVNGTSSAE. In terms of domain architecture, Protein kinase spans 68–361; it reads FEKISELGAG…LKQLMVHAFI (294 aa). ATP is bound by residues 74–82 and K97; that span reads LGAGNGGVV. The Proton acceptor role is filled by D190. A phosphoserine; by RAF mark is found at S218 and S222. The tract at residues 270 to 307 is RAF1-binding; sequence ELELLFGCQVEGDAAETPPRPRTPGRPLSSYGMDSRPP. Residue T286 is modified to Phosphothreonine. Residue T292 is modified to Phosphothreonine; by MAPK1. S298 is subject to Phosphoserine; by PAK.

This sequence belongs to the protein kinase superfamily. STE Ser/Thr protein kinase family. MAP kinase kinase subfamily. As to quaternary structure, found in a complex with at least BRAF, HRAS, MAP2K1, MAPK3/ERK1 and RGS14. Forms a heterodimer with MAP2K2/MEK2. Forms heterodimers with KSR2 which further dimerize to form tetramers. Interacts with KSR1 or KSR2 and BRAF; the interaction with KSR1 or KSR2 mediates KSR1-BRAF or KSR2-BRAF dimerization. Interacts with ARBB2, LAMTOR3, MAPK1/ERK2 and RAF1. Interacts with MAPK1/ERK2. Interacts with MORG1. Interacts with PPARG. Interacts with VRK2. Interacts with SGK1. Interacts with BIRC6/bruce. Interacts with KAT7; the interaction promotes KAT7 phosphorylation. Interacts with RAF1 and NEK10; the interaction is required for ERK1/2-signaling pathway activation in response to UV irradiation. Interacts with TRAF3IP3. Interacts with MOS. Post-translationally, phosphorylation at Ser-218 and Ser-222 by MAP kinase kinase kinases (BRAF or MEKK1) positively regulates kinase activity. Also phosphorylated at Thr-292 by MAPK1/ERK2 and at Ser-298 by PAK. MAPK1/ERK2 phosphorylation of Thr-292 occurs in response to cellular adhesion and leads to inhibition of Ser-298 phosphorylation by PAK. Autophosphorylated at Ser-218 and Ser-222, autophosphosphorylation is promoted by NEK10 following UV irradiation.

It localises to the cytoplasm. The protein localises to the cytoskeleton. The protein resides in the microtubule organizing center. Its subcellular location is the centrosome. It is found in the spindle pole body. It localises to the nucleus. The protein localises to the membrane. It carries out the reaction L-seryl-[protein] + ATP = O-phospho-L-seryl-[protein] + ADP + H(+). The catalysed reaction is L-threonyl-[protein] + ATP = O-phospho-L-threonyl-[protein] + ADP + H(+). The enzyme catalyses L-tyrosyl-[protein] + ATP = O-phospho-L-tyrosyl-[protein] + ADP + H(+). With respect to regulation, ras proteins such as HRAS mediate the activation of RAF proteins such as RAF1 or BRAF which in turn activate extracellular signal-regulated kinases (ERK) through MAPK (mitogen-activated protein kinases) and ERK kinases MAP2K1/MEK1 and MAP2K2/MEK2. Activation occurs through phosphorylation of Ser-218 and Ser-222. MAP2K1/MEK1 binds KSR1 or KSR2 releasing the inhibitory intramolecular interaction between KSR1 or KSR2 protein kinase and N-terminal domains. This allows KSR1 or KSR2 dimerization with BRAF leading to BRAF activation and phosphorylation of MAP2K1. MAP2K1/MEK1 is also the target of negative feed-back regulation by its substrate kinases, such as MAPK1/ERK2. These phosphorylate MAP2K1/MEK1 on Thr-292, thereby facilitating dephosphorylation of the activating residues Ser-218 and Ser-222. Inhibited by serine/threonine phosphatase 2A. Its function is as follows. Dual specificity protein kinase which acts as an essential component of the MAP kinase signal transduction pathway. Binding of extracellular ligands such as growth factors, cytokines and hormones to their cell-surface receptors activates RAS and this initiates RAF1 activation. RAF1 then further activates the dual-specificity protein kinases MAP2K1/MEK1 and MAP2K2/MEK2. Both MAP2K1/MEK1 and MAP2K2/MEK2 function specifically in the MAPK/ERK cascade, and catalyze the concomitant phosphorylation of a threonine and a tyrosine residue in a Thr-Glu-Tyr sequence located in the extracellular signal-regulated kinases MAPK3/ERK1 and MAPK1/ERK2, leading to their activation and further transduction of the signal within the MAPK/ERK cascade. Activates BRAF in a KSR1 or KSR2-dependent manner; by binding to KSR1 or KSR2 releases the inhibitory intramolecular interaction between KSR1 or KSR2 protein kinase and N-terminal domains which promotes KSR1 or KSR2-BRAF dimerization and BRAF activation. Depending on the cellular context, this pathway mediates diverse biological functions such as cell growth, adhesion, survival and differentiation, predominantly through the regulation of transcription, metabolism and cytoskeletal rearrangements. One target of the MAPK/ERK cascade is peroxisome proliferator-activated receptor gamma (PPARG), a nuclear receptor that promotes differentiation and apoptosis. MAP2K1/MEK1 has been shown to export PPARG from the nucleus. The MAPK/ERK cascade is also involved in the regulation of endosomal dynamics, including lysosome processing and endosome cycling through the perinuclear recycling compartment (PNRC), as well as in the fragmentation of the Golgi apparatus during mitosis. This Rattus norvegicus (Rat) protein is Dual specificity mitogen-activated protein kinase kinase 1.